The following is a 341-amino-acid chain: HTH-type transcriptional repressor PurR (341 aa).

The HTH lacI-type domain occupies 2 to 56; that stretch reads ATIKDVAKRANVSTTTVSHVINKTRFVAEETRNAVWAAIKELHYSPSAVARSLKV. The segment at residues 4–23 is a DNA-binding region (H-T-H motif); it reads IKDVAKRANVSTTTVSHVIN. Residues 48-56 mediate DNA binding; that stretch reads SAVARSLKV. Residues Tyr73, Arg190, Thr192, Phe221, and Asp275 each contribute to the hypoxanthine site.

As to quaternary structure, homodimer.

Its pathway is purine metabolism; purine nucleotide biosynthesis [regulation]. In terms of biological role, is the main repressor of the genes involved in the de novo synthesis of purine nucleotides, regulating purB, purC, purEK, purF, purHD, purL, purMN and guaBA expression. PurR is allosterically activated to bind its cognate DNA by binding the purine corepressors, hypoxanthine or guanine, thereby effecting transcription repression. The sequence is that of HTH-type transcriptional repressor PurR from Klebsiella pneumoniae subsp. pneumoniae (strain ATCC 700721 / MGH 78578).